We begin with the raw amino-acid sequence, 139 residues long: Translation initiation factor 2 subunit beta (139 aa).

Belongs to the eIF-2-beta/eIF-5 family. Heterotrimer composed of an alpha, a beta and a gamma chain.

Its function is as follows. eIF-2 functions in the early steps of protein synthesis by forming a ternary complex with GTP and initiator tRNA. This chain is Translation initiation factor 2 subunit beta, found in Nanoarchaeum equitans (strain Kin4-M).